The following is a 36-amino-acid chain: Egg-laying-like hormone (36 aa).

Residue Lys36 is modified to Lysine amide.

As to expression, supra, subesophageal ganglia and segmental ganglia of the ventral nerve cord and brain.

Functionally, may be involved in leech reproduction. This is Egg-laying-like hormone from Theromyzon tessulatum (Duck leech).